The sequence spans 632 residues: tRNA uridine 5-carboxymethylaminomethyl modification enzyme MnmG (632 aa).

FAD-binding positions include 15–20 (GAGHAG), Ile-127, and Ser-182. 276–290 (GPRYCPSIEDKIVRF) lines the NAD(+) pocket. Gln-373 contributes to the FAD binding site.

It belongs to the MnmG family. In terms of assembly, homodimer. Heterotetramer of two MnmE and two MnmG subunits. The cofactor is FAD.

Its subcellular location is the cytoplasm. In terms of biological role, NAD-binding protein involved in the addition of a carboxymethylaminomethyl (cmnm) group at the wobble position (U34) of certain tRNAs, forming tRNA-cmnm(5)s(2)U34. In Streptococcus pyogenes serotype M28 (strain MGAS6180), this protein is tRNA uridine 5-carboxymethylaminomethyl modification enzyme MnmG.